We begin with the raw amino-acid sequence, 201 residues long: Glutathione peroxidase 1 (201 aa).

Residue Ser-32 is modified to Phosphoserine. Residue Sec-47 is part of the active site. Sec-47 is a non-standard amino acid (selenocysteine). N6-acetyllysine; alternate occurs at positions 86 and 112. An N6-succinyllysine; alternate mark is found at Lys-86 and Lys-112. The residue at position 119 (Lys-119) is an N6-acetyllysine. Lys-146 carries the post-translational modification N6-acetyllysine; alternate. Lys-146 is subject to N6-succinyllysine; alternate. Residues Ser-195 and Ser-199 each carry the phosphoserine modification.

This sequence belongs to the glutathione peroxidase family. In terms of assembly, homotetramer. Interacts with MIEN1. During periods of oxidative stress, Sec-47 may react with a superoxide radical, irreversibly lose hydroselenide and be converted to dehydroalanine. As to expression, expressed in liver and lung.

It is found in the cytoplasm. It localises to the mitochondrion. The enzyme catalyses 2 glutathione + H2O2 = glutathione disulfide + 2 H2O. It carries out the reaction a hydroperoxy polyunsaturated fatty acid + 2 glutathione = a hydroxy polyunsaturated fatty acid + glutathione disulfide + H2O. The catalysed reaction is tert-butyl hydroperoxide + 2 glutathione = tert-butanol + glutathione disulfide + H2O. It catalyses the reaction cumene hydroperoxide + 2 glutathione = 2-phenylpropan-2-ol + glutathione disulfide + H2O. The enzyme catalyses (13S)-hydroperoxy-(9Z,11E)-octadecadienoate + 2 glutathione = (13S)-hydroxy-(9Z,11E)-octadecadienoate + glutathione disulfide + H2O. It carries out the reaction (9S)-hydroperoxy-(10E,12Z)-octadecadienoate + 2 glutathione = (9S)-hydroxy-(10E,12Z)-octadecadienoate + glutathione disulfide + H2O. The catalysed reaction is (5S)-hydroperoxy-(6E,8Z,11Z,14Z)-eicosatetraenoate + 2 glutathione = (5S)-hydroxy-(6E,8Z,11Z,14Z)-eicosatetraenoate + glutathione disulfide + H2O. It catalyses the reaction (12S)-hydroperoxy-(5Z,8Z,10E,14Z)-eicosatetraenoate + 2 glutathione = (12S)-hydroxy-(5Z,8Z,10E,14Z)-eicosatetraenoate + glutathione disulfide + H2O. The enzyme catalyses (12R)-hydroperoxy-(5Z,8Z,10E,14Z)-eicosatetraenoate + 2 glutathione = (12R)-hydroxy-(5Z,8Z,10E,14Z)-eicosatetraenoate + glutathione disulfide + H2O. It carries out the reaction (15S)-hydroperoxy-(5Z,8Z,11Z,13E)-eicosatetraenoate + 2 glutathione = (15S)-hydroxy-(5Z,8Z,11Z,13E)-eicosatetraenoate + glutathione disulfide + H2O. The catalysed reaction is (5S)-hydroperoxy-(6E,8Z,11Z,14Z,17Z)-eicosapentaenoate + 2 glutathione = (5S)-hydroxy-(6E,8Z,11Z,14Z,17Z)-eicosapentaenoate + glutathione disulfide + H2O. It catalyses the reaction (12S)-hydroperoxy-(5Z,8Z,10E,14Z,17Z)-eicosapentaenoate + 2 glutathione = (12S)-hydroxy-(5Z,8Z,10E,14Z,17Z)-eicosapentaenoate + glutathione disulfide + H2O. The enzyme catalyses (15S)-hydroperoxy-(5Z,8Z,11Z,13E,17Z)-eicosapentaenoate + 2 glutathione = (15S)-hydroxy-(5Z,8Z,11Z,13E,17Z)-eicosapentaenoate + glutathione disulfide + H2O. It carries out the reaction (15S)-hydroperoxy-(11Z,13E)-eicosadienoate + 2 glutathione = (15S)-hydroxy-(11Z,13E)-eicosadienoate + glutathione disulfide + H2O. The catalysed reaction is (17S)-hydroperoxy-(4Z,7Z,10Z,13Z,15E,19Z)-docosahexaenoate + 2 glutathione = (17S)-hydroxy-(4Z,7Z,10Z,13Z,15E,19Z)-docosahexaenoate + glutathione disulfide + H2O. Its function is as follows. Catalyzes the reduction of hydroperoxides in a glutathione-dependent manner thus regulating cellular redox homeostasis. Can reduce small soluble hydroperoxides such as H2O2, cumene hydroperoxide and tert-butyl hydroperoxide, as well as several fatty acid-derived hydroperoxides. In platelets catalyzes the reduction of 12-hydroperoxyeicosatetraenoic acid, the primary product of the arachidonate 12-lipoxygenase pathway. The sequence is that of Glutathione peroxidase 1 from Rattus norvegicus (Rat).